The chain runs to 251 residues: Transcription initiation factor TFIID subunit 9B (251 aa).

The residue at position 1 (Met1) is an N-acetylmethionine. Ser147 is subject to Phosphoserine. Phosphothreonine occurs at positions 159 and 174. At Ser177 the chain carries Phosphoserine. The segment at 229 to 251 (QNTANEANPLKRKHEDDDDNDIM) is disordered.

This sequence belongs to the TAF9 family. As to quaternary structure, binds TAF5 and TAF6. Component of TFIID and the TATA-binding protein-free TAF complex (TFTC). TFIID is composed of TATA binding protein (TBP) and a number of TBP-associated factors (TAFs). Binds N-terminal domain of p53/TP53 which is essential for transcription.

The protein resides in the nucleus. In terms of biological role, essential for cell viability. TAF9 and TAF9B are involved in transcriptional activation as well as repression of distinct but overlapping sets of genes. May have a role in gene regulation associated with apoptosis. TAFs are components of the transcription factor IID (TFIID) complex, the TBP-free TAFII complex (TFTC), the PCAF histone acetylase complex and the STAGA transcription coactivator-HAT complex. TFIID or TFTC are essential for the regulation of RNA polymerase II-mediated transcription. The sequence is that of Transcription initiation factor TFIID subunit 9B (TAF9B) from Homo sapiens (Human).